Here is a 434-residue protein sequence, read N- to C-terminus: Histidinol dehydrogenase (434 aa).

NAD(+) contacts are provided by Tyr-130, Gln-191, and Asn-214. Positions 237, 259, and 262 each coordinate substrate. Positions 259 and 262 each coordinate Zn(2+). Catalysis depends on proton acceptor residues Glu-328 and His-329. Residues His-329, Asp-362, Glu-416, and His-421 each coordinate substrate. Position 362 (Asp-362) interacts with Zn(2+). His-421 lines the Zn(2+) pocket.

Belongs to the histidinol dehydrogenase family. The cofactor is Zn(2+).

It carries out the reaction L-histidinol + 2 NAD(+) + H2O = L-histidine + 2 NADH + 3 H(+). It participates in amino-acid biosynthesis; L-histidine biosynthesis; L-histidine from 5-phospho-alpha-D-ribose 1-diphosphate: step 9/9. Its function is as follows. Catalyzes the sequential NAD-dependent oxidations of L-histidinol to L-histidinaldehyde and then to L-histidine. The sequence is that of Histidinol dehydrogenase from Rhodospirillum rubrum (strain ATCC 11170 / ATH 1.1.1 / DSM 467 / LMG 4362 / NCIMB 8255 / S1).